The chain runs to 91 residues: Ragulator complex protein LAMTOR5 (91 aa).

This sequence belongs to the LAMTOR5 family. As to quaternary structure, part of the Ragulator complex composed of lamtor1, lamtor2, lamtor3, lamtor4 and lamtor5. The Ragulator complex interacts with slc38a9; the probable amino acid sensor. Component of the lysosomal folliculin complex (LFC).

The protein localises to the cytoplasm. Its subcellular location is the lysosome. Its function is as follows. As part of the Ragulator complex it is involved in amino acid sensing and activation of mTORC1, a signaling complex promoting cell growth in response to growth factors, energy levels, and amino acids. Activated by amino acids through a mechanism involving the lysosomal V-ATPase, the Ragulator plays a dual role for the small GTPases Rag (RagA/RRAGA, RagB/RRAGB, RagC/RRAGC and/or RagD/RRAGD): it (1) acts as a guanine nucleotide exchange factor (GEF), activating the small GTPases Rag and (2) mediates recruitment of Rag GTPases to the lysosome membrane. Activated Ragulator and Rag GTPases function as a scaffold recruiting mTORC1 to lysosomes where it is in turn activated. The sequence is that of Ragulator complex protein LAMTOR5 (lamtor5) from Xenopus tropicalis (Western clawed frog).